The following is a 383-amino-acid chain: Caspase a (383 aa).

The propeptide occupies 1 to 142 (MAKSIKDHLQ…ETYEIKDKSV (142 aa)). Residues 8 to 81 (HLQDALSNIG…RGIKCNAVAE (74 aa)) form the Pyrin domain. Residues 87–106 (TGQGGVSQPEPPVPEPIPKD) are disordered. Catalysis depends on residues histidine 220 and cysteine 270. The propeptide occupies 275–296 (HGRVWASDGEPDEPIEIEDDDF).

It belongs to the peptidase C14A family. As to quaternary structure, heterotetramer that consists of two anti-parallel arranged heterodimers, each one formed by a 20 kDa (p20) and a 10 kDa (p10) subunit. Interacts (via pyrin domain) with pycard (via pyrin domain). Interacts with caspb. Component of NLRP1 inflammasomes. Inflammasomes are supramolecular complexes that assemble in the cytosol in response to pathogens and other damage-associated signals and play critical roles in innate immunity and inflammation. The NLRP1 inflammasome is composed of the signal sensor nlrp1, and the adapter pycard (asc), which recruit effector pro-inflammatory caspases caspa and/or caspb. The interaction between nlrp1 and pycard is required for the sequential recruitment of caspa and then caspb. Caspa is preferentially recruited first and this causes the cleavage of pro-il1b into the midformed il1b. This is followed by the recruitment of caspb, which is activated and cleaves the midformed il1b resulting in il1b maturation. Interacts with caiap. Post-translationally, the two subunits are derived from the precursor sequence by an autocatalytic mechanism.

It is found in the inflammasome. It localises to the cytoplasm. The enzyme catalyses Strict requirement for an Asp residue at position P1 and has a preferred cleavage sequence of Tyr-Val-Ala-Asp-|-.. In terms of biological role, thiol protease which cleaves IL-1 beta (il1b), releasing the mature cytokine which is involved in a variety of inflammatory processes, and mediates apoptosis. Component of the NLRP1 inflammasome, which plays a crucial role in innate immunity and inflammation. In response to pathogens and other damage-associated signals, recruited to the NLRP1 inflammasome in its precursor form. Its subsequent activation causes the cleavage of pro-il1b into the midformed il1b, which then evetually leads to il1b maturation and secretion in the extracellular milieu. Required for the development of the cartilaginous pharyngeal skeleton. The polypeptide is Caspase a (Danio rerio (Zebrafish)).